The primary structure comprises 295 residues: uncharacterized protein (295 aa).

Residues 151–290 (RTAVCARLSS…RAVAAAARAG (140 aa)) form the Resolvase/invertase-type recombinase catalytic domain. The O-(5'-phospho-DNA)-serine intermediate role is filled by S159.

This is an uncharacterized protein from Mycobacterium bovis (strain ATCC BAA-935 / AF2122/97).